The sequence spans 210 residues: Large ribosomal subunit protein uL4 (210 aa).

The interval 46–89 (QGTASTLTRSEVRGGGRKPYKQKGTGRARQGSIRTPLRPGGGII) is disordered. Residues 60 to 71 (GGRKPYKQKGTG) show a composition bias toward basic residues.

This sequence belongs to the universal ribosomal protein uL4 family. In terms of assembly, part of the 50S ribosomal subunit.

Functionally, one of the primary rRNA binding proteins, this protein initially binds near the 5'-end of the 23S rRNA. It is important during the early stages of 50S assembly. It makes multiple contacts with different domains of the 23S rRNA in the assembled 50S subunit and ribosome. Its function is as follows. Forms part of the polypeptide exit tunnel. The chain is Large ribosomal subunit protein uL4 from Prochlorococcus marinus (strain MIT 9215).